Consider the following 505-residue polypeptide: RNA-splicing ligase RtcB homolog (505 aa).

Asp119, Cys122, His227, and His259 together coordinate Mn(2+). Position 226-230 (Asn226–Glu230) interacts with GMP. Position 300 is a phosphoserine (Ser300). Position 353 (His353) interacts with Mn(2+). Residues His353–Asn354, Gly402–Met405, Ser409, and His428–Gly431 contribute to the GMP site. His428 serves as the catalytic GMP-histidine intermediate. Lys496 is covalently cross-linked (Glycyl lysine isopeptide (Lys-Gly) (interchain with G-Cter in SUMO2)). Residue Lys504 coordinates GMP.

It belongs to the RtcB family. As to quaternary structure, catalytic component of the tRNA-splicing ligase complex. Mn(2+) is required as a cofactor.

The protein localises to the nucleus. It localises to the cytoplasm. The enzyme catalyses a 3'-end 3'-phospho-ribonucleotide-RNA + a 5'-end dephospho-ribonucleoside-RNA + GTP = a ribonucleotidyl-ribonucleotide-RNA + GMP + diphosphate. It catalyses the reaction a 3'-end 2',3'-cyclophospho-ribonucleotide-RNA + a 5'-end dephospho-ribonucleoside-RNA + GTP + H2O = a ribonucleotidyl-ribonucleotide-RNA + GMP + diphosphate + H(+). Catalytic subunit of the tRNA-splicing ligase complex that acts by directly joining spliced tRNA halves to mature-sized tRNAs by incorporating the precursor-derived splice junction phosphate into the mature tRNA as a canonical 3',5'-phosphodiester. May act as an RNA ligase with broad substrate specificity, and may function toward other RNAs. This chain is RNA-splicing ligase RtcB homolog, found in Rattus norvegicus (Rat).